The chain runs to 339 residues: tRNA pseudouridine synthase D (339 aa).

The active-site Nucleophile is the Asp80. The region spanning Gly155–Pro311 is the TRUD domain.

This sequence belongs to the pseudouridine synthase TruD family.

It catalyses the reaction uridine(13) in tRNA = pseudouridine(13) in tRNA. In terms of biological role, responsible for synthesis of pseudouridine from uracil-13 in transfer RNAs. This chain is tRNA pseudouridine synthase D, found in Haemophilus influenzae (strain 86-028NP).